A 1773-amino-acid polypeptide reads, in one-letter code: Zinc finger CCCH domain-containing protein 19 (1773 aa).

A disordered region spans residues 145–166 (SGDRLEENKEVSMEEEPSSHEL). Over residues 147–156 (DRLEENKEVS) the composition is skewed to basic and acidic residues. The stretch at 196–218 (GEEIESDLESKKEKVDVIEEETT) forms a coiled coil. Disordered regions lie at residues 270–290 (IGEGAKDLTDGDAKEGVDVTE), 361–409 (DVDK…AGQT), and 434–591 (ISEM…KTVK). 2 stretches are compositionally biased toward basic and acidic residues: residues 273 to 286 (GAKDLTDGDAKEGV) and 361 to 378 (DVDKDSEAGKSLDIHVPE). The stretch at 403-437 (AEEAGQTVDLEEIREENQELSKELAQVDETKISEM) forms a coiled coil. Basic and acidic residues-rich tracts occupy residues 444 to 455 (MIKDEDQEKDDN) and 497 to 513 (KVDRTKIAEVSEETDTR). 2 stretches are compositionally biased toward acidic residues: residues 514–529 (IEDEDQEKDDEMTDVA) and 551–572 (EEMTETQEDSVMADEEPEEVEE). Residues 578 to 588 (GGKRKRGRNTK) are compositionally biased toward basic residues. The Nuclear localization signal 1 motif lies at 581–588 (RKRGRNTK). The segment at 599–665 (EDVCFMCFDG…TYLCYTCMFS (67 aa)) adopts a PHD-type zinc-finger fold. A compositionally biased stretch (basic and acidic residues) spans 741–751 (AKRPLKGHETN). A disordered region spans residues 741–797 (AKRPLKGHETNASKQGTASETDYVTDGGSDSDSSPKKRKTRSRSKSGSAEKILSSGD). Residues 752 to 762 (ASKQGTASETD) are compositionally biased toward polar residues. In terms of domain architecture, SWIB/MDM2 spans 801–884 (SDETMEWASK…LNLLDSHFLK (84 aa)). The segment covering 903–919 (PNHVDVDENLDHPVKSG) has biased composition (basic and acidic residues). Residues 903–935 (PNHVDVDENLDHPVKSGKDKKRKTRKKNVRKGR) form a disordered region. The segment covering 920-935 (KDKKRKTRKKNVRKGR) has biased composition (basic residues). The Nuclear localization signal 2 motif lies at 921–928 (DKKRKTRK). Residues 944–1076 (AVDMHNINLI…KAIALQEVRV (133 aa)) enclose the Plus3 domain. Basic and acidic residues predominate over residues 1139–1152 (EEIPEIHADPKMDP). The disordered stretch occupies residues 1139-1274 (EEIPEIHADP…PETPARSSRA (136 aa)). The segment covering 1153–1163 (DCESEDEDEKE) has biased composition (acidic residues). Residues 1193–1212 (FSSNESWTGTSNYSNTSANR) are compositionally biased toward polar residues. Position 1281 is a phosphoserine (Ser-1281). In terms of domain architecture, GYF spans 1307–1361 (EKIWHYKDPSGKVQGPFSMAQLRKWNNTGYFPAKLEIWKANESPLDSVLLTDALA). Polar residues-rich tracts occupy residues 1409-1433 (RNSQDTWSQGGSLPSPTPNQITTPT), 1441-1469 (SRWSPTKPSPQSANQSMNYSVAQSGQSQT), 1499-1509 (VSVNHSATLHS), and 1518-1528 (SWGSMQTDHGG). Disordered stretches follow at residues 1409–1469 (RNSQ…QSQT), 1485–1605 (QPQT…SWGQ), and 1649–1746 (GQTQ…QQNN). Low complexity predominate over residues 1529 to 1555 (SNTPSSQNNSTSYGTPSPSVLPSQSQP). Residues 1569–1579 (SQPNAQAQAQW) show a composition bias toward polar residues. Low complexity-rich tracts occupy residues 1585–1602 (NNNQNSAQPQAPANQNSS) and 1666–1677 (QSQSQSQVQAQA). The segment covering 1678–1708 (GTTGSGWMQPGQGIQSGNSNQNWGTQNQTAI) has biased composition (polar residues). Positions 1722-1735 (GNQQQSQNGDSGYG) are enriched in low complexity. Residues 1737-1746 (NRQSGGQQNN) show a composition bias toward polar residues. Residues 1747-1773 (FKGQRVCKFFRENGHCRKGASCNYLHN) form a C3H1-type zinc finger.

As to quaternary structure, interacts with unmethylated histone H3 and AGO2. The interaction with AGO2 in required to direct DNA methylation and silencing. In terms of tissue distribution, expressed in seedlings, mostly in the vasculature and shoot apices of young seedlings.

It localises to the nucleus. Its function is as follows. Plays a central role in integrating RNA silencing and chromatin signals in 21 nt siRNA-dependent DNA methylation on cytosine pathway leading to transcriptional gene silencing of specific sequences. Involved in a chromatin-based RNA silencing pathway that encompasses both post-transcriptional gene silencing (PTGS) (e.g. RDR1, RDR6 and AGO2) and transcriptional gene silencing (TGS) (e.g. siRNA-dependent DNA methylation and histone H3) components. Mediates siRNA accumulation at specific chromatin loci. Binds H3K4me0 through its PHD to enforce low levels of H3K4 methylation and gene silencing at a subset of genomic loci. This is Zinc finger CCCH domain-containing protein 19 (NERD) from Arabidopsis thaliana (Mouse-ear cress).